The sequence spans 529 residues: MIVLGLEGTAHTISCGIIDESRILAMESSMYRPKTGGIRPLDAAVHHSEVIDTVISRALEKAKISIHDIDLIGFSMGPGLAPSLRVTATAARTISVLTGKPIIGVNHPLGHIEIGRRVTGAIDPVMLYVSGGNTQVIAHVNGRYRVLGETLDIGIGNMIDKFAREAGIPFPGGPEIEKLAMKGTKLLDLPYSVKGMDTAFSGILTAALQYLKTGQAIEDISYSIQETAFAMLVEVLERALYVSGKDEILMAGGVALNRRLRDMVTNMAREAGIRSYLTDREYCMDNGIMIAQAALLMYKSGVRMSVEETAVNPRFRIDEVDAPWITDASRKDYGKAGAESRIEEVSFHGRPAIRKVRISKSYRNSDLDKKIRYERMRNEFTILRKLKEAGVNSPVVYDFDPFSMSITMQKIPGRMMSAELNEGRTDFLNELGIMIAKMHRAGIAHGDLTVNNIIVNDSVFIIDPSMGKVNAEIEDMAVDIYALEDSIKGLGLDSGSVIGQMLKSYRNNFNLADDVLETVSAIRRRHRYV.

Residues 1-324 (MIVLGLEGTA…FRIDEVDAPW (324 aa)) are kae1. Fe cation-binding residues include H107, H111, and Y128. L-threonylcarbamoyladenylate-binding positions include 128-132 (YVSGG), D160, G173, E177, and N257. Residue D285 participates in Fe cation binding. Residues 329–529 (SRKDYGKAGA…SAIRRRHRYV (201 aa)) form the Protein kinase domain. ATP-binding positions include 335–342 (KAGAESRI) and K355. D447 (proton acceptor; for kinase activity) is an active-site residue.

It in the N-terminal section; belongs to the KAE1 / TsaD family. The protein in the C-terminal section; belongs to the protein kinase superfamily. Tyr protein kinase family. BUD32 subfamily. Component of the KEOPS complex that consists of Kae1, Bud32, Cgi121 and Pcc1; the whole complex dimerizes. The cofactor is Fe(2+).

The protein localises to the cytoplasm. The enzyme catalyses L-seryl-[protein] + ATP = O-phospho-L-seryl-[protein] + ADP + H(+). It carries out the reaction L-threonyl-[protein] + ATP = O-phospho-L-threonyl-[protein] + ADP + H(+). It catalyses the reaction L-threonylcarbamoyladenylate + adenosine(37) in tRNA = N(6)-L-threonylcarbamoyladenosine(37) in tRNA + AMP + H(+). Functionally, required for the formation of a threonylcarbamoyl group on adenosine at position 37 (t(6)A37) in tRNAs that read codons beginning with adenine. Is a component of the KEOPS complex that is probably involved in the transfer of the threonylcarbamoyl moiety of threonylcarbamoyl-AMP (TC-AMP) to the N6 group of A37. The Kae1 domain likely plays a direct catalytic role in this reaction. The Bud32 domain probably displays kinase activity that regulates Kae1 function. This is Probable bifunctional tRNA threonylcarbamoyladenosine biosynthesis protein from Thermoplasma acidophilum (strain ATCC 25905 / DSM 1728 / JCM 9062 / NBRC 15155 / AMRC-C165).